We begin with the raw amino-acid sequence, 105 residues long: Large ribosomal subunit protein uL24 (105 aa).

The protein belongs to the universal ribosomal protein uL24 family. In terms of assembly, part of the 50S ribosomal subunit.

Its function is as follows. One of two assembly initiator proteins, it binds directly to the 5'-end of the 23S rRNA, where it nucleates assembly of the 50S subunit. One of the proteins that surrounds the polypeptide exit tunnel on the outside of the subunit. This chain is Large ribosomal subunit protein uL24, found in Mycobacterium tuberculosis (strain CDC 1551 / Oshkosh).